The sequence spans 192 residues: Thymidine kinase (192 aa).

Residues 9 to 16 (SAMNAGKS) and 87 to 90 (DECQ) each bind ATP. Glu88 serves as the catalytic Proton acceptor. Residues Cys145, Cys147, Cys182, and His185 each coordinate Zn(2+).

This sequence belongs to the thymidine kinase family. Homotetramer.

It localises to the cytoplasm. It catalyses the reaction thymidine + ATP = dTMP + ADP + H(+). This is Thymidine kinase from Vibrio cholerae serotype O1 (strain ATCC 39315 / El Tor Inaba N16961).